A 278-amino-acid chain; its full sequence is Ribosomal RNA small subunit methyltransferase A (278 aa).

The S-adenosyl-L-methionine site is built by Asn18, Leu20, Gly45, Glu66, Asp89, and Asn110.

It belongs to the class I-like SAM-binding methyltransferase superfamily. rRNA adenine N(6)-methyltransferase family. RsmA subfamily.

The protein localises to the cytoplasm. The enzyme catalyses adenosine(1518)/adenosine(1519) in 16S rRNA + 4 S-adenosyl-L-methionine = N(6)-dimethyladenosine(1518)/N(6)-dimethyladenosine(1519) in 16S rRNA + 4 S-adenosyl-L-homocysteine + 4 H(+). Specifically dimethylates two adjacent adenosines (A1518 and A1519) in the loop of a conserved hairpin near the 3'-end of 16S rRNA in the 30S particle. May play a critical role in biogenesis of 30S subunits. In Cupriavidus metallidurans (strain ATCC 43123 / DSM 2839 / NBRC 102507 / CH34) (Ralstonia metallidurans), this protein is Ribosomal RNA small subunit methyltransferase A.